Reading from the N-terminus, the 347-residue chain is MRRLLLLFGGRSQEHSVSYASARALLEHICDEWTVIPVGITKHGDFVYCSTVSEQDYGEVIDNGNRVVWPSRAGCKKIEVVQARGKSFFVEFDLVFPLLHGVFGEDGTIQGMLDLLDIPYVGSGVFASAAAMDKHYTKILCSHAGIPVLPWYLIKGHAWHKNRDSFLKQISDRFTFPLFVKPVDAGSSFGCTFVDFFEQLPVAIEHALQHGKSAIVEPALDAPEVFCSLIENNGVLQCSELVFVKHSGSKFYDYSAKYLNPVEFVIPAQFDNTDGYAEIASKVFFELGCRHYARIDFFVTESGLVLNEINTSPGLTQKSIFPSSFKSMQYSQVIETILASAYCQVKR.

An ATP-grasp domain is found at lysine 138–alanine 339. Serine 171–phenylalanine 226 contributes to the ATP binding site. The Mg(2+) site is built by aspartate 296, glutamate 308, and asparagine 310.

It belongs to the D-alanine--D-alanine ligase family. Mg(2+) serves as cofactor. Requires Mn(2+) as cofactor.

Its subcellular location is the cytoplasm. The catalysed reaction is 2 D-alanine + ATP = D-alanyl-D-alanine + ADP + phosphate + H(+). It functions in the pathway cell wall biogenesis; peptidoglycan biosynthesis. Cell wall formation. This chain is D-alanine--D-alanine ligase, found in Tropheryma whipplei (strain Twist) (Whipple's bacillus).